The chain runs to 71 residues: Translation initiation factor IF-1 (71 aa).

Positions 1–71 (MSKDDLIQFT…LTKGRVIHRH (71 aa)) constitute an S1-like domain.

This sequence belongs to the IF-1 family. As to quaternary structure, component of the 30S ribosomal translation pre-initiation complex which assembles on the 30S ribosome in the order IF-2 and IF-3, IF-1 and N-formylmethionyl-tRNA(fMet); mRNA recruitment can occur at any time during PIC assembly.

It is found in the cytoplasm. In terms of biological role, one of the essential components for the initiation of protein synthesis. Stabilizes the binding of IF-2 and IF-3 on the 30S subunit to which N-formylmethionyl-tRNA(fMet) subsequently binds. Helps modulate mRNA selection, yielding the 30S pre-initiation complex (PIC). Upon addition of the 50S ribosomal subunit IF-1, IF-2 and IF-3 are released leaving the mature 70S translation initiation complex. This Rickettsia typhi (strain ATCC VR-144 / Wilmington) protein is Translation initiation factor IF-1.